The primary structure comprises 339 residues: tRNA N6-adenosine threonylcarbamoyltransferase (339 aa).

2 residues coordinate Fe cation: histidine 114 and histidine 118. Substrate-binding positions include valine 137 to glycine 141, aspartate 170, glycine 183, aspartate 187, and asparagine 277. Aspartate 305 serves as a coordination point for Fe cation.

It belongs to the KAE1 / TsaD family. The cofactor is Fe(2+).

Its subcellular location is the cytoplasm. The enzyme catalyses L-threonylcarbamoyladenylate + adenosine(37) in tRNA = N(6)-L-threonylcarbamoyladenosine(37) in tRNA + AMP + H(+). Required for the formation of a threonylcarbamoyl group on adenosine at position 37 (t(6)A37) in tRNAs that read codons beginning with adenine. Is involved in the transfer of the threonylcarbamoyl moiety of threonylcarbamoyl-AMP (TC-AMP) to the N6 group of A37, together with TsaE and TsaB. TsaD likely plays a direct catalytic role in this reaction. This is tRNA N6-adenosine threonylcarbamoyltransferase from Clostridium perfringens (strain ATCC 13124 / DSM 756 / JCM 1290 / NCIMB 6125 / NCTC 8237 / Type A).